The following is a 64-amino-acid chain: Sulfur carrier protein ThiS (64 aa).

Glycine 64 carries the post-translational modification 1-thioglycine; alternate. Glycine 64 is modified (glycyl adenylate; alternate). A Glycyl cysteine thioester (Gly-Cys) (interchain with C-192 in TtuC); alternate cross-link involves residue glycine 64.

Belongs to the sulfur carrier protein ThiS family. C-terminal thiocarboxylation occurs in 2 steps, it is first acyl-adenylated (-COAMP) by TtuC, then thiocarboxylated (-COSH) by the cysteine desulfurases IscS or SufS.

Its pathway is cofactor biosynthesis; thiamine diphosphate biosynthesis. In terms of biological role, is the sulfur donor in the synthesis of the thiazole phosphate moiety of thiamine phosphate. This Thermus thermophilus (strain ATCC BAA-163 / DSM 7039 / HB27) protein is Sulfur carrier protein ThiS.